The sequence spans 605 residues: Elongation factor 4 (605 aa).

Residues 9–192 enclose the tr-type G domain; the sequence is NRIRNFCIIA…AIVQRIPAPA (184 aa). GTP contacts are provided by residues 21–26 and 139–142; these read DHGKST and NKID.

It belongs to the TRAFAC class translation factor GTPase superfamily. Classic translation factor GTPase family. LepA subfamily.

It localises to the cell inner membrane. It catalyses the reaction GTP + H2O = GDP + phosphate + H(+). In terms of biological role, required for accurate and efficient protein synthesis under certain stress conditions. May act as a fidelity factor of the translation reaction, by catalyzing a one-codon backward translocation of tRNAs on improperly translocated ribosomes. Back-translocation proceeds from a post-translocation (POST) complex to a pre-translocation (PRE) complex, thus giving elongation factor G a second chance to translocate the tRNAs correctly. Binds to ribosomes in a GTP-dependent manner. The sequence is that of Elongation factor 4 from Pelodictyon phaeoclathratiforme (strain DSM 5477 / BU-1).